A 430-amino-acid chain; its full sequence is Phosphomethylpyrimidine synthase (430 aa).

Substrate contacts are provided by residues Asn67, Met96, Tyr125, His161, 183 to 185 (SRG), 224 to 227 (DALR), and Glu263. His267 contributes to the Zn(2+) binding site. Tyr290 lines the substrate pocket. His331 provides a ligand contact to Zn(2+). Cys406, Cys409, and Cys413 together coordinate [4Fe-4S] cluster.

This sequence belongs to the ThiC family. Homodimer. [4Fe-4S] cluster is required as a cofactor.

It catalyses the reaction 5-amino-1-(5-phospho-beta-D-ribosyl)imidazole + S-adenosyl-L-methionine = 4-amino-2-methyl-5-(phosphooxymethyl)pyrimidine + CO + 5'-deoxyadenosine + formate + L-methionine + 3 H(+). It participates in cofactor biosynthesis; thiamine diphosphate biosynthesis. Catalyzes the synthesis of the hydroxymethylpyrimidine phosphate (HMP-P) moiety of thiamine from aminoimidazole ribotide (AIR) in a radical S-adenosyl-L-methionine (SAM)-dependent reaction. The protein is Phosphomethylpyrimidine synthase of Campylobacter jejuni subsp. jejuni serotype O:6 (strain 81116 / NCTC 11828).